We begin with the raw amino-acid sequence, 57 residues long: Sec-independent protein translocase protein TatA (57 aa).

A helical membrane pass occupies residues 1–21 (MGISVWQLLIILLIVVMLFGT). Residues 37–57 (GFRKSVSDGETTTQAEASSRS) are disordered. A compositionally biased stretch (polar residues) spans 44–57 (DGETTTQAEASSRS).

Belongs to the TatA/E family. In terms of assembly, the Tat system comprises two distinct complexes: a TatABC complex, containing multiple copies of TatA, TatB and TatC subunits, and a separate TatA complex, containing only TatA subunits. Substrates initially bind to the TatABC complex, which probably triggers association of the separate TatA complex to form the active translocon.

The protein resides in the cell inner membrane. Its function is as follows. Part of the twin-arginine translocation (Tat) system that transports large folded proteins containing a characteristic twin-arginine motif in their signal peptide across membranes. TatA could form the protein-conducting channel of the Tat system. The protein is Sec-independent protein translocase protein TatA of Stutzerimonas stutzeri (Pseudomonas stutzeri).